The chain runs to 120 residues: Protein ORF-C (120 aa).

The protein resides in the host mitochondrion. Functionally, induces alteration of mitochondrial function that results in apoptosis contributing to tumor regression. This is Protein ORF-C (orfC) from Walleye dermal sarcoma virus (WDSV).